The sequence spans 196 residues: Probable signal peptidase I-1 (196 aa).

Topologically, residues 1 to 16 (MQNSPIPSPWQFIKEN) are cytoplasmic. Residues 17 to 35 (IPLLMVALVLALLLRFFVA) traverse the membrane as a helical segment. Over 36-196 (EPRYIPSDSM…FVPARTIINT (161 aa)) the chain is Periplasmic. Active-site residues include serine 44 and lysine 94.

Belongs to the peptidase S26 family.

It localises to the cell membrane. The enzyme catalyses Cleavage of hydrophobic, N-terminal signal or leader sequences from secreted and periplasmic proteins.. In Synechocystis sp. (strain ATCC 27184 / PCC 6803 / Kazusa), this protein is Probable signal peptidase I-1 (lepB1).